The sequence spans 346 residues: Phosphoribosylformylglycinamidine cyclo-ligase (346 aa).

Belongs to the AIR synthase family.

Its subcellular location is the cytoplasm. The catalysed reaction is 2-formamido-N(1)-(5-O-phospho-beta-D-ribosyl)acetamidine + ATP = 5-amino-1-(5-phospho-beta-D-ribosyl)imidazole + ADP + phosphate + H(+). The protein operates within purine metabolism; IMP biosynthesis via de novo pathway; 5-amino-1-(5-phospho-D-ribosyl)imidazole from N(2)-formyl-N(1)-(5-phospho-D-ribosyl)glycinamide: step 2/2. The protein is Phosphoribosylformylglycinamidine cyclo-ligase of Bacillus mycoides (strain KBAB4) (Bacillus weihenstephanensis).